We begin with the raw amino-acid sequence, 413 residues long: Coiled-coil domain-containing protein 83 (413 aa).

The interval 1 to 21 is disordered; that stretch reads MENSGKANKKDTHDGPPKEIK. Basic and acidic residues predominate over residues 8–21; sequence NKKDTHDGPPKEIK. Coiled coils occupy residues 37-184 and 216-256; these read EDAV…RKKI and WEND…LSNC.

The polypeptide is Coiled-coil domain-containing protein 83 (CCDC83) (Homo sapiens (Human)).